Reading from the N-terminus, the 369-residue chain is MVPCTLLLLLAAALAPTQTRAGPHSLRYFVTAVSRPGLGEPRYMEVGYVDDTEFVRFDSDAENPRYEPRARWMEQEGPEYWERETQKAKGNEQSFRVDLRTLLGYYNQSKGGSHTIQVISGCEVGSDGRLLRGYQQYAYDGCDYIALNEDLKTWTAADMAALITKHKWEQAGEAERLRAYLEGTCVEWLRRYLKNGNATLLRTDSPKAHVTHHSRPEDKVTLRCWALGFYPADITLTWQLNGEELIQDMELVETRPAGDGTFQKWASVVVPLGKEQYYTCHVYHQGLPEPLTLRWEPPPSTVSNMATVAVLVVLGAAIVTGAVVAFVMKMRRRNTGGKGGDYALAPGSQTSDLSLPDCKVMVHDPHSLA.

An N-terminal signal peptide occupies residues 1–21 (MVPCTLLLLLAAALAPTQTRA). An alpha-1 region spans residues 22–111 (GPHSLRYFVT…LLGYYNQSKG (90 aa)). Over 22 to 305 (GPHSLRYFVT…EPPPSTVSNM (284 aa)) the chain is Extracellular. An N-linked (GlcNAc...) asparagine glycan is attached at Asn107. The alpha-2 stretch occupies residues 112 to 203 (GSHTIQVISG…KNGNATLLRT (92 aa)). A disulfide bridge connects residues Cys122 and Cys185. Asn197 is a glycosylation site (N-linked (GlcNAc...) asparagine). An alpha-3 region spans residues 204-295 (DSPKAHVTHH…GLPEPLTLRW (92 aa)). An Ig-like C1-type domain is found at 206–294 (PKAHVTHHSR…QGLPEPLTLR (89 aa)). Cys224 and Cys280 are disulfide-bonded. The connecting peptide stretch occupies residues 296-305 (EPPPSTVSNM). A helical membrane pass occupies residues 306-328 (ATVAVLVVLGAAIVTGAVVAFVM). Topologically, residues 329-369 (KMRRRNTGGKGGDYALAPGSQTSDLSLPDCKVMVHDPHSLA) are cytoplasmic. Phosphoserine is present on residues Ser351 and Ser354.

This sequence belongs to the MHC class I family. As to quaternary structure, heterodimer of an alpha chain and a beta chain (beta-2-microglobulin).

The protein resides in the membrane. Involved in the presentation of foreign antigens to the immune system. The protein is H-2 class I histocompatibility antigen, K-B alpha chain (H2-K1) of Mus musculus (Mouse).